Reading from the N-terminus, the 316-residue chain is ATP synthase gamma chain (316 aa).

Belongs to the ATPase gamma chain family. In terms of assembly, F-type ATPases have 2 components, CF(1) - the catalytic core - and CF(0) - the membrane proton channel. CF(1) has five subunits: alpha(3), beta(3), gamma(1), delta(1), epsilon(1). CF(0) has three main subunits: a, b and c.

It localises to the cellular thylakoid membrane. Functionally, produces ATP from ADP in the presence of a proton gradient across the membrane. The gamma chain is believed to be important in regulating ATPase activity and the flow of protons through the CF(0) complex. The polypeptide is ATP synthase gamma chain (Prochlorococcus marinus (strain NATL1A)).